Reading from the N-terminus, the 330-residue chain is Peroxidase N1 (330 aa).

An N-terminal signal peptide occupies residues 1–29 (MEYYHHSINKMAMFMVILVLAIDVTMVLG). Gln-30 carries the pyrrolidone carboxylic acid modification. Intrachain disulfides connect Cys-41–Cys-117, Cys-74–Cys-79, Cys-123–Cys-326, and Cys-201–Cys-233. Residue His-72 is the Proton acceptor of the active site. Positions 73, 76, 78, 80, and 82 each coordinate Ca(2+). Pro-164 is a substrate binding site. His-194 provides a ligand contact to heme b. Residue Thr-195 participates in Ca(2+) binding. Residue Asn-212 is glycosylated (N-linked (GlcNAc...) asparagine). Residues Asp-246 and Asp-254 each coordinate Ca(2+).

It belongs to the peroxidase family. Classical plant (class III) peroxidase subfamily. Ca(2+) is required as a cofactor. It depends on heme b as a cofactor. As to expression, expressed at a high level in roots and at a trace level in lower leaves. Not expressed in upper leaves, stems, flowers, seeds and shoot apices.

It localises to the secreted. It carries out the reaction 2 a phenolic donor + H2O2 = 2 a phenolic radical donor + 2 H2O. In terms of biological role, removal of H(2)O(2), oxidation of toxic reductants, biosynthesis and degradation of lignin, suberization, auxin catabolism, response to environmental stresses such as wounding, pathogen attack and oxidative stress. These functions might be dependent on each isozyme/isoform in each plant tissue. Can use NADH, NADPH and monolignols as substrates. In Nicotiana tabacum (Common tobacco), this protein is Peroxidase N1.